A 924-amino-acid polypeptide reads, in one-letter code: Mediator of RNA polymerase II transcription subunit 16 (924 aa).

The protein belongs to the Mediator complex subunit 16 family. As to quaternary structure, component of the Mediator complex.

The protein resides in the nucleus. Its function is as follows. Component of the Mediator complex, a coactivator involved in the regulated transcription of nearly all RNA polymerase II-dependent genes. Mediator functions as a bridge to convey information from gene-specific regulatory proteins to the basal RNA polymerase II transcription machinery. Mediator is recruited to promoters by direct interactions with regulatory proteins and serves as a scaffold for the assembly of a functional preinitiation complex with RNA polymerase II and the general transcription factors. This Yarrowia lipolytica (strain CLIB 122 / E 150) (Yeast) protein is Mediator of RNA polymerase II transcription subunit 16 (SIN4).